The sequence spans 248 residues: MINKTRTTVDQSEIDHFSRIAAEWWNPQGKFRPLHKFNPTRLAYIKEKICLAFDRDPFSLAPFAGLKILDIGCGGGLLCEPMVRLGATVIGADAAQNNIEVAKIHATQSGLSIDYRATTAEKLADKGEKFDIILNMEIVEHVADVDLFISATAKMLKPQGLMFIATLNRTWKSWGLAIVGAEYILRWLPKGTHDYKKFLKPQELKKLLLTNSLKVIDELGITYNPLNDSWNRSKDMDVNYMLLVKRLQ.

Residues Arg-41, Gly-72, Asp-93, and Met-136 each coordinate S-adenosyl-L-methionine.

This sequence belongs to the methyltransferase superfamily. UbiG/COQ3 family.

The enzyme catalyses a 3-demethylubiquinol + S-adenosyl-L-methionine = a ubiquinol + S-adenosyl-L-homocysteine + H(+). It carries out the reaction a 3-(all-trans-polyprenyl)benzene-1,2-diol + S-adenosyl-L-methionine = a 2-methoxy-6-(all-trans-polyprenyl)phenol + S-adenosyl-L-homocysteine + H(+). Its pathway is cofactor biosynthesis; ubiquinone biosynthesis. In terms of biological role, O-methyltransferase that catalyzes the 2 O-methylation steps in the ubiquinone biosynthetic pathway. The polypeptide is Ubiquinone biosynthesis O-methyltransferase (Bartonella bacilliformis (strain ATCC 35685 / KC583 / Herrer 020/F12,63)).